The sequence spans 56 residues: Small ribosomal subunit protein uS14 (56 aa).

4 residues coordinate Zn(2+): Cys-21, Cys-24, Cys-39, and Cys-42.

It belongs to the universal ribosomal protein uS14 family. In terms of assembly, component of the 40S small ribosomal subunit. Zn(2+) serves as cofactor.

It localises to the cytoplasm. The protein resides in the cytosol. It is found in the rough endoplasmic reticulum. In Plutella xylostella (Diamondback moth), this protein is Small ribosomal subunit protein uS14 (RpS29).